A 593-amino-acid polypeptide reads, in one-letter code: Probable E3 ubiquitin-protein ligase ARI2 (593 aa).

Positions Ser120–Gln334 are TRIAD supradomain. 18 residues coordinate Zn(2+): Cys124, Cys127, Cys141, His143, Cys146, Cys149, Cys168, Cys173, Cys215, Cys221, Cys237, Cys239, Cys244, Cys247, His252, Cys257, Cys284, and Cys287. The segment at Cys124 to Cys173 adopts an RING-type 1 zinc-finger fold. The segment at Glu195–Cys257 adopts an IBR-type zinc-finger fold. The RING-type 2; atypical zinc finger occupies Cys284–Cys312. Cys297 is a catalytic residue. The Zn(2+) site is built by Cys302, Cys304, Cys309, Cys312, His320, and Cys330.

It belongs to the RBR family. Ariadne subfamily. It depends on Zn(2+) as a cofactor. As to expression, ubiquitous.

The enzyme catalyses [E2 ubiquitin-conjugating enzyme]-S-ubiquitinyl-L-cysteine + [acceptor protein]-L-lysine = [E2 ubiquitin-conjugating enzyme]-L-cysteine + [acceptor protein]-N(6)-ubiquitinyl-L-lysine.. Its pathway is protein modification; protein ubiquitination. Might act as an E3 ubiquitin-protein ligase, or as part of E3 complex, which accepts ubiquitin from specific E2 ubiquitin-conjugating enzymes and then transfers it to substrates. This is Probable E3 ubiquitin-protein ligase ARI2 (ARI2) from Arabidopsis thaliana (Mouse-ear cress).